The chain runs to 211 residues: Probable transcriptional regulatory protein SgaR (211 aa).

The 117-residue stretch at 10–126 folds into the Response regulatory domain; the sequence is EVSIVDQNPV…VLLEAVVSVA (117 aa). 4-aspartylphosphate is present on D15. The 66-residue stretch at 141–206 folds into the HTH luxR-type domain; the sequence is NHDPLESLTA…MAVALHVSIN (66 aa). The H-T-H motif DNA-binding region spans 165 to 184; sequence NLQIAARTGISRNTVKYHLK.

Not known. Could act on the sgaA gene expression. In Hyphomicrobium methylovorum, this protein is Probable transcriptional regulatory protein SgaR (sgaR).